Here is a 912-residue protein sequence, read N- to C-terminus: Multiple C2 and transmembrane domain-containing protein (912 aa).

Positions 1-33 are enriched in low complexity; sequence MSRIQYVDQVDQVELDQQQQPGSSSTVSGSTPP. 2 disordered regions span residues 1 to 80 and 145 to 165; these read MSRI…KRAK and SSEG…IGGS. The segment covering 38–49 has biased composition (polar residues); the sequence is PHGSPSLQQSQR. C2 domains follow at residues 218 to 337, 371 to 493, and 522 to 637; these read QANE…HLQL, RNSK…HLML, and ERYK…TLKD. Residues Asp-252, Asp-258, Asp-305, Asp-307, and Asp-313 each contribute to the Ca(2+) site. Residues Asp-553, Asp-559, Asp-605, and Asp-607 each coordinate Ca(2+). 2 consecutive transmembrane segments (helical) span residues 729 to 749 and 826 to 846; these read IVAC…LIIL and LTWL…FVPL. Residues 887–912 are disordered; the sequence is NQYRELPPSAPTDQTRNNPKKKLKGS.

Ca(2+) serves as cofactor. In terms of tissue distribution, motor neurons (at protein level).

The protein localises to the endoplasmic reticulum membrane. Calcium sensor which is essential for the stabilization of normal baseline neurotransmitter release and for the induction and long-term maintenance of presynaptic homeostatic plasticity. The sequence is that of Multiple C2 and transmembrane domain-containing protein from Drosophila melanogaster (Fruit fly).